We begin with the raw amino-acid sequence, 266 residues long: Dihydropteroate synthase (266 aa).

The Pterin-binding domain maps to 12–260 (AAIMGILNVT…DVKANQDIVA (249 aa)). Asparagine 19 lines the Mg(2+) pocket. Residues threonine 59, aspartate 93, asparagine 112, aspartate 176, lysine 212, and 248–250 (RVH) each bind (7,8-dihydropterin-6-yl)methyl diphosphate.

The protein belongs to the DHPS family. Homodimer or homotrimer. Mg(2+) serves as cofactor.

It carries out the reaction (7,8-dihydropterin-6-yl)methyl diphosphate + 4-aminobenzoate = 7,8-dihydropteroate + diphosphate. It participates in cofactor biosynthesis; tetrahydrofolate biosynthesis; 7,8-dihydrofolate from 2-amino-4-hydroxy-6-hydroxymethyl-7,8-dihydropteridine diphosphate and 4-aminobenzoate: step 1/2. Its function is as follows. Catalyzes the condensation of para-aminobenzoate (pABA) with 6-hydroxymethyl-7,8-dihydropterin diphosphate (DHPt-PP) to form 7,8-dihydropteroate (H2Pte), the immediate precursor of folate derivatives. This is Dihydropteroate synthase (folP) from Streptococcus pyogenes serotype M18 (strain MGAS8232).